A 782-amino-acid polypeptide reads, in one-letter code: Chondroitin proteoglycan 4 (782 aa).

The signal sequence occupies residues 1–18 (MRLVYSLIFLLFIPFSHP). N-linked (GlcNAc...) asparagine glycans are attached at residues N76, N208, N462, N468, N474, and N503. The segment at 513–726 (ISEKSTEESS…EDQGSGNYKK (214 aa)) is disordered. Low complexity-rich tracts occupy residues 520-532 (ESSG…SGDG), 548-566 (SGSS…SSGE), 573-612 (SSGS…SSDT), 662-672 (FGESSGSSGES), and 688-722 (SGSS…QGSG). N-linked (GlcNAc...) asparagine glycosylation occurs at N559. O-linked (Xyl...) (chondroitin sulfate) serine glycosylation is present at S691. N699 carries an N-linked (GlcNAc...) asparagine glycan. S701, S704, S708, S714, and S721 each carry an O-linked (Xyl...) (chondroitin sulfate) serine glycan. N-linked (GlcNAc...) asparagine glycosylation occurs at N743.

In Caenorhabditis elegans, this protein is Chondroitin proteoglycan 4.